We begin with the raw amino-acid sequence, 223 residues long: Arginine kinase (223 aa).

Residues 56–222 (FVISTRVRLI…LELIKIEKEM (167 aa)) form the Phosphagen kinase C-terminal domain. Residues 59–63 (STRVR) and H68 contribute to the ATP site. C141 lines the L-arginine pocket. Residues 150-154 (RASVH) and 175-180 (RGTRGE) contribute to the ATP site. E180 is a binding site for L-arginine.

Belongs to the ATP:guanido phosphotransferase family.

The enzyme catalyses L-arginine + ATP = N(omega)-phospho-L-arginine + ADP + H(+). This Chionoecetes opilio (Atlantic snow crab) protein is Arginine kinase.